The chain runs to 136 residues: MNHSVFVILITITYFGLNQACIKNIVEILNQLAPGQILEYHCRSEDDNLGVKQLNFNATPFVIRFHDEIPNLTRWNCIFRQGPNNSYSYDIEVYKAGPRLIPRCGQLRVWAARIDGIYFARKYNTPLVRVLSWNKN.

An N-terminal signal peptide occupies residues 1 to 20 (MNHSVFVILITITYFGLNQA). 2 N-linked (GlcNAc...) asparagine glycosylation sites follow: N71 and N84.

This sequence belongs to the plant self-incompatibility (S1) protein family.

Its subcellular location is the secreted. The polypeptide is S-protein homolog 25 (Arabidopsis thaliana (Mouse-ear cress)).